The chain runs to 446 residues: ATP-dependent protease ATPase subunit HslU (446 aa).

Residues isoleucine 18, glycine 60 to glutamate 65, aspartate 259, glutamate 324, and arginine 396 contribute to the ATP site.

It belongs to the ClpX chaperone family. HslU subfamily. As to quaternary structure, a double ring-shaped homohexamer of HslV is capped on each side by a ring-shaped HslU homohexamer. The assembly of the HslU/HslV complex is dependent on binding of ATP.

It localises to the cytoplasm. Functionally, ATPase subunit of a proteasome-like degradation complex; this subunit has chaperone activity. The binding of ATP and its subsequent hydrolysis by HslU are essential for unfolding of protein substrates subsequently hydrolyzed by HslV. HslU recognizes the N-terminal part of its protein substrates and unfolds these before they are guided to HslV for hydrolysis. The sequence is that of ATP-dependent protease ATPase subunit HslU from Vibrio atlanticus (strain LGP32) (Vibrio splendidus (strain Mel32)).